A 138-amino-acid chain; its full sequence is Probable prefoldin subunit 4 (138 aa).

It belongs to the prefoldin subunit beta family. Heterohexamer of two PFD-alpha type and four PFD-beta type subunits.

In terms of biological role, binds specifically to cytosolic chaperonin (c-CPN) and transfers target proteins to it. Binds to nascent polypeptide chain and promotes folding in an environment in which there are many competing pathways for nonnative proteins. This chain is Probable prefoldin subunit 4, found in Drosophila melanogaster (Fruit fly).